The primary structure comprises 221 residues: Superoxide dismutase [Mn] 1, mitochondrial (221 aa).

A mitochondrion-targeting transit peptide spans 1-24 (MLQNTVRCVSKLVQPITGVAAVRS). 4 residues coordinate Mn(2+): H50, H98, D182, and H186.

This sequence belongs to the iron/manganese superoxide dismutase family. As to quaternary structure, homotetramer. Mn(2+) is required as a cofactor.

The protein localises to the mitochondrion matrix. It carries out the reaction 2 superoxide + 2 H(+) = H2O2 + O2. Destroys superoxide anion radicals which are normally produced within the cells and which are toxic to biological systems. This chain is Superoxide dismutase [Mn] 1, mitochondrial (sod-2), found in Caenorhabditis elegans.